A 606-amino-acid chain; its full sequence is UvrABC system protein C (606 aa).

A GIY-YIG domain is found at 14–93 (QNPGVYLMKD…IKKHSPRYNV (80 aa)). The region spanning 203–238 (PDLINRLKFEMQTEADLEHFERAAQIRDTILAIQTT) is the UVR domain.

This sequence belongs to the UvrC family. In terms of assembly, interacts with UvrB in an incision complex.

Its subcellular location is the cytoplasm. Its function is as follows. The UvrABC repair system catalyzes the recognition and processing of DNA lesions. UvrC both incises the 5' and 3' sides of the lesion. The N-terminal half is responsible for the 3' incision and the C-terminal half is responsible for the 5' incision. This chain is UvrABC system protein C, found in Desulforapulum autotrophicum (strain ATCC 43914 / DSM 3382 / VKM B-1955 / HRM2) (Desulfobacterium autotrophicum).